A 576-amino-acid polypeptide reads, in one-letter code: M-phase inducer phosphatase 2 (576 aa).

The residue at position 42 (Ser-42) is a Phosphoserine. A compositionally biased stretch (low complexity) spans 90 to 105 (RRTSECSLSSESSESS). The interval 90–119 (RRTSECSLSSESSESSDAGLCMDSPSPVDP) is disordered. A Phosphoserine; by MELK modification is found at Ser-167. Ser-248 carries the phosphoserine modification. The residue at position 321 (Ser-321) is a Phosphoserine; by MELK and MAPK14. The disordered stretch occupies residues 338 to 358 (QDRDVPVQSKRRKSVTPLEEQ). Ser-351 is modified (phosphoserine; by AURKA). Residue Ser-372 is modified to Phosphoserine; by BRSK1 and MAPK14. Residues 427 to 534 (IVEKFVIVDC…FFPQHPNFCE (108 aa)) form the Rhodanese domain. Residue Cys-483 is part of the active site. The residue at position 559 (Ser-559) is a Phosphoserine.

The protein belongs to the MPI phosphatase family. In terms of assembly, interacts with MAPK14 and 14-3-3 proteins. Post-translationally, phosphorylated by BRSK1 in vitro. Phosphorylated by CHEK1, which inhibits the activity of this protein. Phosphorylation at Ser-351 by AURKA might locally participate in the control of the onset of mitosis. Phosphorylation by MELK at Ser-167 promotes localization to the centrosome and the spindle poles during mitosis. Phosphorylation at Ser-321 and Ser-372 by MAPK14 is required for binding to 14-3-3 proteins. In terms of tissue distribution, expressed predominantly in spleen, lung, heart, brain, intestine, and muscle.

The protein localises to the cytoplasm. It is found in the cytoskeleton. The protein resides in the microtubule organizing center. Its subcellular location is the centrosome. It localises to the spindle pole. It carries out the reaction O-phospho-L-tyrosyl-[protein] + H2O = L-tyrosyl-[protein] + phosphate. Its activity is regulated as follows. Stimulated by B-type cyclins. Tyrosine protein phosphatase which functions as a dosage-dependent inducer of mitotic progression. Directly dephosphorylates CDK1 and stimulates its kinase activity. Required for G2/M phases of the cell cycle progression and abscission during cytokinesis in a ECT2-dependent manner. The three isoforms seem to have a different level of activity. This Mus musculus (Mouse) protein is M-phase inducer phosphatase 2 (Cdc25b).